Reading from the N-terminus, the 77-residue chain is U8-lycotoxin-Ls1r (77 aa).

Residues 1–20 (MKLIIFTGLVLFAIVSLIEA) form the signal peptide. Residues 21–26 (QAENEK) constitute a propeptide that is removed on maturation.

Belongs to the neurotoxin 19 (CSTX) family. 08 (U8-Lctx) subfamily. In terms of processing, contains 4 disulfide bonds. Expressed by the venom gland.

The protein resides in the secreted. The polypeptide is U8-lycotoxin-Ls1r (Lycosa singoriensis (Wolf spider)).